Reading from the N-terminus, the 561-residue chain is NADH-quinone oxidoreductase subunit C/D (561 aa).

Residues Met1 to Leu152 form an NADH dehydrogenase I subunit C region. Residues Lys176–Arg561 form an NADH dehydrogenase I subunit D region.

It in the N-terminal section; belongs to the complex I 30 kDa subunit family. This sequence in the C-terminal section; belongs to the complex I 49 kDa subunit family. In terms of assembly, NDH-1 is composed of 13 different subunits. Subunits NuoB, CD, E, F, and G constitute the peripheral sector of the complex.

It is found in the cell inner membrane. The catalysed reaction is a quinone + NADH + 5 H(+)(in) = a quinol + NAD(+) + 4 H(+)(out). Its function is as follows. NDH-1 shuttles electrons from NADH, via FMN and iron-sulfur (Fe-S) centers, to quinones in the respiratory chain. The immediate electron acceptor for the enzyme in this species is believed to be ubiquinone. Couples the redox reaction to proton translocation (for every two electrons transferred, four hydrogen ions are translocated across the cytoplasmic membrane), and thus conserves the redox energy in a proton gradient. This is NADH-quinone oxidoreductase subunit C/D from Campylobacter fetus subsp. fetus (strain 82-40).